The following is a 491-amino-acid chain: Bifunctional protein GlmU (491 aa).

Positions 1–238 are pyrophosphorylase; the sequence is MTTQPAVPAA…EWEIRGVNDR (238 aa). Residues 14-17, Lys-28, Gln-81, 86-87, 110-112, Gly-149, Glu-163, Asn-178, and Asn-236 contribute to the UDP-N-acetyl-alpha-D-glucosamine site; these read LAAG, GT, and YGD. Asp-112 provides a ligand contact to Mg(2+). Asn-236 provides a ligand contact to Mg(2+). The linker stretch occupies residues 239 to 259; the sequence is AQLADLAAEANRRTLRRWMLA. The tract at residues 260–491 is N-acetyltransferase; that stretch reads GVTIADPATT…TASTDREIQP (232 aa). 2 residues coordinate UDP-N-acetyl-alpha-D-glucosamine: Arg-341 and Lys-359. His-371 acts as the Proton acceptor in catalysis. UDP-N-acetyl-alpha-D-glucosamine contacts are provided by Tyr-374 and Asn-385. Acetyl-CoA contacts are provided by residues Ala-388, 394–395, Ser-413, and Ala-431; that span reads NY. Residues 460 to 491 are disordered; that stretch reads AKRPGTPAAEAAQRANDESTGTTASTDREIQP.

This sequence in the N-terminal section; belongs to the N-acetylglucosamine-1-phosphate uridyltransferase family. In the C-terminal section; belongs to the transferase hexapeptide repeat family. Homotrimer. It depends on Mg(2+) as a cofactor.

It is found in the cytoplasm. The catalysed reaction is alpha-D-glucosamine 1-phosphate + acetyl-CoA = N-acetyl-alpha-D-glucosamine 1-phosphate + CoA + H(+). It carries out the reaction N-acetyl-alpha-D-glucosamine 1-phosphate + UTP + H(+) = UDP-N-acetyl-alpha-D-glucosamine + diphosphate. Its pathway is nucleotide-sugar biosynthesis; UDP-N-acetyl-alpha-D-glucosamine biosynthesis; N-acetyl-alpha-D-glucosamine 1-phosphate from alpha-D-glucosamine 6-phosphate (route II): step 2/2. It participates in nucleotide-sugar biosynthesis; UDP-N-acetyl-alpha-D-glucosamine biosynthesis; UDP-N-acetyl-alpha-D-glucosamine from N-acetyl-alpha-D-glucosamine 1-phosphate: step 1/1. It functions in the pathway bacterial outer membrane biogenesis; LPS lipid A biosynthesis. Functionally, catalyzes the last two sequential reactions in the de novo biosynthetic pathway for UDP-N-acetylglucosamine (UDP-GlcNAc). The C-terminal domain catalyzes the transfer of acetyl group from acetyl coenzyme A to glucosamine-1-phosphate (GlcN-1-P) to produce N-acetylglucosamine-1-phosphate (GlcNAc-1-P), which is converted into UDP-GlcNAc by the transfer of uridine 5-monophosphate (from uridine 5-triphosphate), a reaction catalyzed by the N-terminal domain. This chain is Bifunctional protein GlmU, found in Kineococcus radiotolerans (strain ATCC BAA-149 / DSM 14245 / SRS30216).